Here is a 256-residue protein sequence, read N- to C-terminus: Glutamate racemase (256 aa).

Substrate is bound by residues 11-12 and 43-44; these read DS and YG. Cysteine 74 (proton donor/acceptor) is an active-site residue. 75-76 is a binding site for substrate; the sequence is NT. Catalysis depends on cysteine 182, which acts as the Proton donor/acceptor. Position 183–184 (183–184) interacts with substrate; the sequence is TH.

This sequence belongs to the aspartate/glutamate racemases family.

The catalysed reaction is L-glutamate = D-glutamate. The protein operates within cell wall biogenesis; peptidoglycan biosynthesis. Functionally, provides the (R)-glutamate required for cell wall biosynthesis. The polypeptide is Glutamate racemase (Leptospira interrogans serogroup Icterohaemorrhagiae serovar copenhageni (strain Fiocruz L1-130)).